Here is a 283-residue protein sequence, read N- to C-terminus: Pantothenate synthetase (283 aa).

ATP is bound at residue 34 to 41 (MGALHEGH). His-41 serves as the catalytic Proton donor. Residue Gln-65 participates in (R)-pantoate binding. Gln-65 provides a ligand contact to beta-alanine. ATP is bound at residue 152–155 (GQKD). Gln-158 contributes to the (R)-pantoate binding site. ATP is bound by residues Val-181 and 189 to 192 (MSSR).

This sequence belongs to the pantothenate synthetase family. As to quaternary structure, homodimer.

Its subcellular location is the cytoplasm. It carries out the reaction (R)-pantoate + beta-alanine + ATP = (R)-pantothenate + AMP + diphosphate + H(+). It participates in cofactor biosynthesis; (R)-pantothenate biosynthesis; (R)-pantothenate from (R)-pantoate and beta-alanine: step 1/1. In terms of biological role, catalyzes the condensation of pantoate with beta-alanine in an ATP-dependent reaction via a pantoyl-adenylate intermediate. The sequence is that of Pantothenate synthetase from Nitrobacter winogradskyi (strain ATCC 25391 / DSM 10237 / CIP 104748 / NCIMB 11846 / Nb-255).